A 457-amino-acid polypeptide reads, in one-letter code: Argininosuccinate lyase (457 aa).

Belongs to the lyase 1 family. Argininosuccinate lyase subfamily.

It is found in the cytoplasm. The catalysed reaction is 2-(N(omega)-L-arginino)succinate = fumarate + L-arginine. It participates in amino-acid biosynthesis; L-arginine biosynthesis; L-arginine from L-ornithine and carbamoyl phosphate: step 3/3. This Shewanella sediminis (strain HAW-EB3) protein is Argininosuccinate lyase.